Reading from the N-terminus, the 313-residue chain is Methylenetetrahydrofolate dehydrogenase [NAD(+)] (313 aa).

Cys-152 is a catalytic residue. Residues 187 to 188, 210 to 211, and 270 to 272 each bind NAD(+); these read RS, DI, and FAG.

The protein belongs to the tetrahydrofolate dehydrogenase/cyclohydrolase family. As to quaternary structure, homodimer.

It carries out the reaction (6R)-5,10-methylene-5,6,7,8-tetrahydrofolate + NAD(+) = (6R)-5,10-methenyltetrahydrofolate + NADH. It functions in the pathway one-carbon metabolism; tetrahydrofolate interconversion. Catalyzes oxidation of cytoplasmic one-carbon units for purine biosynthesis. This chain is Methylenetetrahydrofolate dehydrogenase [NAD(+)] (thfA), found in Dictyostelium discoideum (Social amoeba).